The chain runs to 255 residues: High-affinity branched-chain amino acid transport ATP-binding protein LivG (255 aa).

Positions 6 to 254 (LAVNGLMMRF…PDVIRAYLGE (249 aa)) constitute an ABC transporter domain. An ATP-binding site is contributed by 38-45 (GPNGAGKT).

The protein belongs to the ABC transporter superfamily.

In terms of biological role, component of the high-affinity branched-chain amino acid transport system. In Salmonella typhi, this protein is High-affinity branched-chain amino acid transport ATP-binding protein LivG (livG).